A 141-amino-acid chain; its full sequence is MQLTNFTDFGLRALIYLGSLPEGELTSITVVTETFDVSRNHMVKIINKLGQEGYVKTIRGKNGGICLGKPADQIIIGDVIRAIEPLQVVNCAPEFCHITPACRLKGALAKAKQAFLDELDKHTIQDMLTDNSELLILLKRI.

The HTH rrf2-type domain occupies Gln-2–Thr-129. The H-T-H motif DNA-binding region spans Ile-28–Gln-51. Positions 91, 96, and 102 each coordinate [2Fe-2S] cluster.

[2Fe-2S] cluster is required as a cofactor.

In terms of biological role, nitric oxide-sensitive repressor of genes involved in protecting the cell against nitrosative stress. May require iron for activity. The sequence is that of HTH-type transcriptional repressor NsrR from Aliivibrio fischeri (strain ATCC 700601 / ES114) (Vibrio fischeri).